The following is a 449-amino-acid chain: GPI mannosyltransferase 2 (449 aa).

The Cytoplasmic segment spans residues 1–7 (MTEKVTK). The chain crosses the membrane as a helical span at residues 8–28 (LALASRLIVLLVQLVANGALP). The Lumenal segment spans residues 29–82 (EHKPDVFRMPVSSDQNASWIDKVIKRCLGGLRHWDGEYFLHIAENLYSYENTLA). Asn-44 carries an N-linked (GlcNAc...) asparagine glycan. A helical transmembrane segment spans residues 83–103 (FYPLYPVVVRHVGQAVEAIGI). Residues 104–109 (SLSQES) lie on the Cytoplasmic side of the membrane. A helical membrane pass occupies residues 110–130 (ILLVVAVALNFWLFCESANLL). Residues 131–148 (FQLTQVLFNDLNKSWNAA) lie on the Lumenal side of the membrane. Asn-142 carries N-linked (GlcNAc...) asparagine glycosylation. Residues 149–169 (LIYCFNPATIFFTAAYSETFF) form a helical membrane-spanning segment. Residues 170–196 (AYSSLHLMLECSKPTGSFRYLRLGTAL) are Cytoplasmic-facing. A helical membrane pass occupies residues 197–217 (AACLLCRSNGLITLGYPLYFF). The Lumenal portion of the chain corresponds to 218–235 (GRQLLLKNKEPNTCMQLT). A helical membrane pass occupies residues 236 to 256 (QMTLTILGAIGILHTYYFYIY). At 257–368 (RLYCLPNTRP…GFKELIRDHT (112 aa)) the chain is on the cytoplasmic side. The chain crosses the membrane as a helical span at residues 369 to 389 (TFPFVLHAAILTLVCTVYVHI). Topologically, residues 390–423 (QVSTRLLASATPVFYWFAADHMPKTLAQLKLRSK) are lumenal. A helical membrane pass occupies residues 424 to 444 (AGALFVWCTTYSLVGTVLFSN). Residues 445–449 (NYPWT) lie on the Cytoplasmic side of the membrane.

The protein belongs to the PIGV family.

The protein localises to the endoplasmic reticulum membrane. It participates in glycolipid biosynthesis; glycosylphosphatidylinositol-anchor biosynthesis. In terms of biological role, mannosyltransferase involved in glycosylphosphatidylinositol-anchor biosynthesis. Transfers the second mannose to the glycosylphosphatidylinositol during GPI precursor assembly. Required for the GPI-mediated endoplasmic reticulum exit and proper targeting to the cell surface of chp. Required for GPI-mediated membrane attachment of chp, qsm and Cont. Essential for microvillar stability in the rhabdomere. The sequence is that of GPI mannosyltransferase 2 from Drosophila melanogaster (Fruit fly).